Here is a 290-residue protein sequence, read N- to C-terminus: 4-hydroxy-tetrahydrodipicolinate synthase (290 aa).

Threonine 48 is a binding site for pyruvate. The active-site Proton donor/acceptor is the tyrosine 137. Lysine 165 (schiff-base intermediate with substrate) is an active-site residue. Isoleucine 206 is a binding site for pyruvate.

The protein belongs to the DapA family. Homotetramer; dimer of dimers.

Its subcellular location is the cytoplasm. The enzyme catalyses L-aspartate 4-semialdehyde + pyruvate = (2S,4S)-4-hydroxy-2,3,4,5-tetrahydrodipicolinate + H2O + H(+). The protein operates within amino-acid biosynthesis; L-lysine biosynthesis via DAP pathway; (S)-tetrahydrodipicolinate from L-aspartate: step 3/4. Catalyzes the condensation of (S)-aspartate-beta-semialdehyde [(S)-ASA] and pyruvate to 4-hydroxy-tetrahydrodipicolinate (HTPA). This chain is 4-hydroxy-tetrahydrodipicolinate synthase, found in Enterococcus faecalis (strain ATCC 700802 / V583).